Here is a 108-residue protein sequence, read N- to C-terminus: VQ motif-containing protein 10 (108 aa).

The VQ motif lies at 29 to 38; that stretch reads FKTVVQELTG. The segment at 65–85 is disordered; the sequence is IGEDTRQLHGGGGGGGRMGTT. The segment covering 73–82 has biased composition (gly residues); it reads HGGGGGGGRM.

Interacts with WRKY25, WRKY26 and WRKY33.

The protein resides in the nucleus. Functionally, may modulate WRKY transcription factor activities. In Arabidopsis thaliana (Mouse-ear cress), this protein is VQ motif-containing protein 10.